The primary structure comprises 340 residues: Holliday junction branch migration complex subunit RuvB (340 aa).

The tract at residues Thr-4–Tyr-184 is large ATPase domain (RuvB-L). ATP-binding positions include Arg-24, Gly-65, Lys-68, Thr-69, Thr-70, Glu-131 to Phe-133, Arg-174, Tyr-184, and Arg-221. Thr-69 lines the Mg(2+) pocket. The small ATPAse domain (RuvB-S) stretch occupies residues Ser-185–Glu-255. Residues Pro-258–Glu-340 form a head domain (RuvB-H) region. DNA contacts are provided by Arg-294, Arg-313, and Arg-318.

The protein belongs to the RuvB family. As to quaternary structure, homohexamer. Forms an RuvA(8)-RuvB(12)-Holliday junction (HJ) complex. HJ DNA is sandwiched between 2 RuvA tetramers; dsDNA enters through RuvA and exits via RuvB. An RuvB hexamer assembles on each DNA strand where it exits the tetramer. Each RuvB hexamer is contacted by two RuvA subunits (via domain III) on 2 adjacent RuvB subunits; this complex drives branch migration. In the full resolvosome a probable DNA-RuvA(4)-RuvB(12)-RuvC(2) complex forms which resolves the HJ.

The protein localises to the cytoplasm. The enzyme catalyses ATP + H2O = ADP + phosphate + H(+). The RuvA-RuvB-RuvC complex processes Holliday junction (HJ) DNA during genetic recombination and DNA repair, while the RuvA-RuvB complex plays an important role in the rescue of blocked DNA replication forks via replication fork reversal (RFR). RuvA specifically binds to HJ cruciform DNA, conferring on it an open structure. The RuvB hexamer acts as an ATP-dependent pump, pulling dsDNA into and through the RuvAB complex. RuvB forms 2 homohexamers on either side of HJ DNA bound by 1 or 2 RuvA tetramers; 4 subunits per hexamer contact DNA at a time. Coordinated motions by a converter formed by DNA-disengaged RuvB subunits stimulates ATP hydrolysis and nucleotide exchange. Immobilization of the converter enables RuvB to convert the ATP-contained energy into a lever motion, pulling 2 nucleotides of DNA out of the RuvA tetramer per ATP hydrolyzed, thus driving DNA branch migration. The RuvB motors rotate together with the DNA substrate, which together with the progressing nucleotide cycle form the mechanistic basis for DNA recombination by continuous HJ branch migration. Branch migration allows RuvC to scan DNA until it finds its consensus sequence, where it cleaves and resolves cruciform DNA. The polypeptide is Holliday junction branch migration complex subunit RuvB (Hydrogenovibrio crunogenus (strain DSM 25203 / XCL-2) (Thiomicrospira crunogena)).